The sequence spans 187 residues: Elongation factor P (187 aa).

Belongs to the elongation factor P family.

The protein resides in the cytoplasm. The protein operates within protein biosynthesis; polypeptide chain elongation. Its function is as follows. Involved in peptide bond synthesis. Stimulates efficient translation and peptide-bond synthesis on native or reconstituted 70S ribosomes in vitro. Probably functions indirectly by altering the affinity of the ribosome for aminoacyl-tRNA, thus increasing their reactivity as acceptors for peptidyl transferase. The protein is Elongation factor P of Brachyspira hyodysenteriae (strain ATCC 49526 / WA1).